Reading from the N-terminus, the 357-residue chain is Peptide chain release factor 1 (357 aa).

Gln-234 bears the N5-methylglutamine mark.

The protein belongs to the prokaryotic/mitochondrial release factor family. Methylated by PrmC. Methylation increases the termination efficiency of RF1.

Its subcellular location is the cytoplasm. In terms of biological role, peptide chain release factor 1 directs the termination of translation in response to the peptide chain termination codons UAG and UAA. The sequence is that of Peptide chain release factor 1 from Lactococcus lactis subsp. cremoris (strain MG1363).